The sequence spans 311 residues: MALPIIIDCDPGHDDAIALVLALASPELEVKAITSSAGNQTPEKTLRNVLRMLTLLKRLDIPVAGGAVKPLMRELIIADNVHGESGLDGPALPEPSFAPQSGTAVELMAKTLRESAQPVTIVSTGPQTNVALLLNSHPELHTKIARIVIMGGAMALGNWTPAAEFNIYVDPEAAEIVFQSGIPVVMAGLDVTHKAQIHAADIERFRAIGNPISTIVAELLDFFMEYHKDEKWGFVGAPLHDPCTIAWLLKPEIFTTVERWVGVETQGKYTQGMTVVDYYFLTGNKPNATVMVDVDRQGFVDLLAERLQYYA.

H240 is a catalytic residue.

It belongs to the IUNH family. RihA subfamily.

In terms of biological role, hydrolyzes cytidine or uridine to ribose and cytosine or uracil, respectively. This is Pyrimidine-specific ribonucleoside hydrolase RihA from Salmonella typhimurium (strain LT2 / SGSC1412 / ATCC 700720).